The primary structure comprises 639 residues: tRNA 5-methylaminomethyl-2-thiouridine biosynthesis bifunctional protein MnmC (639 aa).

The segment at 1–228 (MSEPIEWLED…KRDNLQATYA (228 aa)) is tRNA (mnm(5)s(2)U34)-methyltransferase. An FAD-dependent cmnm(5)s(2)U34 oxidoreductase region spans residues 254 to 639 (VGAGLAGAAV…SERWLGYEPQ (386 aa)).

The protein in the N-terminal section; belongs to the methyltransferase superfamily. tRNA (mnm(5)s(2)U34)-methyltransferase family. In the C-terminal section; belongs to the DAO family. The cofactor is FAD.

Its subcellular location is the cytoplasm. It carries out the reaction 5-aminomethyl-2-thiouridine(34) in tRNA + S-adenosyl-L-methionine = 5-methylaminomethyl-2-thiouridine(34) in tRNA + S-adenosyl-L-homocysteine + H(+). Functionally, catalyzes the last two steps in the biosynthesis of 5-methylaminomethyl-2-thiouridine (mnm(5)s(2)U) at the wobble position (U34) in tRNA. Catalyzes the FAD-dependent demodification of cmnm(5)s(2)U34 to nm(5)s(2)U34, followed by the transfer of a methyl group from S-adenosyl-L-methionine to nm(5)s(2)U34, to form mnm(5)s(2)U34. This Acidovorax sp. (strain JS42) protein is tRNA 5-methylaminomethyl-2-thiouridine biosynthesis bifunctional protein MnmC.